Here is a 558-residue protein sequence, read N- to C-terminus: Laccase-4 (558 aa).

A signal peptide spans methionine 1–serine 24. Plastocyanin-like domains lie at asparagine 32–glycine 148 and asparagine 158–threonine 308. Asparagine 37 and asparagine 78 each carry an N-linked (GlcNAc...) asparagine glycan. Positions 82 and 84 each coordinate Cu cation. Residue asparagine 114 is glycosylated (N-linked (GlcNAc...) asparagine). Cu cation is bound by residues histidine 127 and histidine 129. N-linked (GlcNAc...) asparagine glycosylation is found at asparagine 187, asparagine 296, asparagine 323, asparagine 330, asparagine 373, asparagine 383, asparagine 400, asparagine 418, and asparagine 441. Residues aspartate 408–lysine 542 enclose the Plastocyanin-like 3 domain. Cu cation is bound by residues histidine 459, histidine 462, and histidine 464. N-linked (GlcNAc...) asparagine glycosylation occurs at asparagine 479. Residues histidine 521, cysteine 522, histidine 523, and histidine 527 each coordinate Cu cation. Asparagine 545 carries an N-linked (GlcNAc...) asparagine glycan.

Belongs to the multicopper oxidase family. Cu cation is required as a cofactor. As to expression, ubiquitous, with higher levels in the inflorescence stem.

It is found in the secreted. It localises to the extracellular space. The protein resides in the apoplast. It carries out the reaction 4 hydroquinone + O2 = 4 benzosemiquinone + 2 H2O. Its function is as follows. Lignin degradation and detoxification of lignin-derived products. Required for secondary xylem cell wall lignification. This is Laccase-4 (IRX12) from Arabidopsis thaliana (Mouse-ear cress).